The sequence spans 158 residues: Endoribonuclease YbeY (158 aa).

Zn(2+) is bound by residues H121, H125, and H131.

It belongs to the endoribonuclease YbeY family. Zn(2+) serves as cofactor.

It localises to the cytoplasm. Single strand-specific metallo-endoribonuclease involved in late-stage 70S ribosome quality control and in maturation of the 3' terminus of the 16S rRNA. This is Endoribonuclease YbeY from Exiguobacterium sibiricum (strain DSM 17290 / CCUG 55495 / CIP 109462 / JCM 13490 / 255-15).